The following is a 470-amino-acid chain: 5-hydroxytryptamine receptor 2A (470 aa).

At 1-80 (MDILCEENTS…LQEKNWSALL (80 aa)) the chain is on the extracellular side. Asn-38 carries an N-linked (GlcNAc...) asparagine glycan. A helical membrane pass occupies residues 81-97 (TAVVIILTIAGNILVIM). The Cytoplasmic portion of the chain corresponds to 98 to 111 (AVSLEKKLQNATNY). A helical membrane pass occupies residues 112–137 (FLMSLAIADMLLGFLVMPVSTLTILY). Over 138-146 (GYRWPLPSK) the chain is Extracellular. Residues 147–171 (LCAVWIYLDVLFSTASIMHLCAISL) traverse the membrane as a helical segment. Cys-148 and Cys-227 are oxidised to a cystine. Serotonin is bound at residue Asp-155. The short motif at 172–174 (DRY) is the DRY motif; important for ligand-induced conformation changes element. Residues 172-191 (DRYVAIQNPIHHSRFNSRTK) are Cytoplasmic-facing. Residues 192-215 (AFLKIIAVWTISVGISMPIPVFGL) form a helical membrane-spanning segment. The Extracellular portion of the chain corresponds to 216-232 (QDDSKVFKEGSCLLADE). A helical membrane pass occupies residues 233–258 (NFVLIGSFVAFFIPLTIMVITYFLTI). At 259-321 (KSLQKEATLC…QSISNEQKAC (63 aa)) the chain is on the cytoplasmic side. Ser-280 is modified (phosphoserine). Residues 322–347 (KVLGIVFFLFVVMWCPFFITNIMAVI) form a helical membrane-spanning segment. Asn-342 serves as a coordination point for serotonin. A disulfide bond links Cys-348 and Cys-352. Residues 348-355 (CKESCNRD) are Extracellular-facing. Residues 356 to 381 (VIEALLNVFVWIGYLSSAVNPLVYTL) form a helical membrane-spanning segment. Residues 375-379 (NPLVY) carry the NPxxY motif; important for ligand-induced conformation changes and signaling motif. Topologically, residues 382 to 470 (FNKTYRSAFS…NTVNEKVSCV (89 aa)) are cytoplasmic. A disordered region spans residues 424 to 470 (QMGPKKNSKKDDKTTDNDCTMVALGKEHPEDAPADSSNTVNEKVSCV). The segment covering 458 to 470 (DSSNTVNEKVSCV) has biased composition (polar residues). Positions 468–470 (SCV) match the PDZ-binding motif.

Belongs to the G-protein coupled receptor 1 family. As to quaternary structure, interacts (via C-terminus) with MPDZ and PATJ. May interact (via C-terminus) with MPP3, PRDX6, DLG4, DLG1, CASK, APBA1 and MAGI2. Interacts with GRM2 and DRD2; this may affect signaling.

Its subcellular location is the cell membrane. The protein localises to the cell projection. The protein resides in the dendrite. It localises to the axon. It is found in the cytoplasmic vesicle. Its subcellular location is the membrane. The protein localises to the caveola. The protein resides in the presynapse. G-protein coupled receptor activity is regulated by lipids: oleamide increases HTR2A-mediated activity. Its function is as follows. G-protein coupled receptor for 5-hydroxytryptamine (serotonin). Also functions as a receptor for various drugs and psychoactive substances, including mescaline, psilocybin, 1-(2,5-dimethoxy-4-iodophenyl)-2-aminopropane (DOI) and lysergic acid diethylamide (LSD). Ligand binding causes a conformation change that triggers signaling via guanine nucleotide-binding proteins (G proteins) and modulates the activity of downstream effectors. HTR2A is coupled to G(q)/G(11) G alpha proteins and activates phospholipase C-beta, releasing diacylglycerol (DAG) and inositol 1,4,5-trisphosphate (IP3) second messengers that modulate the activity of phosphatidylinositol 3-kinase and promote the release of Ca(2+) ions from intracellular stores, respectively. Beta-arrestin family members inhibit signaling via G proteins and mediate activation of alternative signaling pathways. Affects neural activity, perception, cognition and mood. Plays a role in the regulation of behavior, including responses to anxiogenic situations and psychoactive substances. Plays a role in intestinal smooth muscle contraction, and may play a role in arterial vasoconstriction. The sequence is that of 5-hydroxytryptamine receptor 2A (HTR2A) from Bos taurus (Bovine).